The sequence spans 376 residues: N-acetyldiaminopimelate deacetylase (376 aa).

The active site involves D69. Residue E128 is the Proton acceptor of the active site.

It belongs to the peptidase M20A family. N-acetyldiaminopimelate deacetylase subfamily.

It carries out the reaction N-acetyl-(2S,6S)-2,6-diaminopimelate + H2O = (2S,6S)-2,6-diaminopimelate + acetate. The protein operates within amino-acid biosynthesis; L-lysine biosynthesis via DAP pathway; LL-2,6-diaminopimelate from (S)-tetrahydrodipicolinate (acetylase route): step 3/3. Catalyzes the conversion of N-acetyl-diaminopimelate to diaminopimelate and acetate. The sequence is that of N-acetyldiaminopimelate deacetylase from Bacillus cereus (strain ATCC 14579 / DSM 31 / CCUG 7414 / JCM 2152 / NBRC 15305 / NCIMB 9373 / NCTC 2599 / NRRL B-3711).